Consider the following 362-residue polypeptide: Putative membrane-bound acyltransferase YfiQ (362 aa).

10 helical membrane passes run 11–31, 44–64, 82–102, 119–139, 153–173, 181–201, 220–240, 252–267, 283–303, and 308–328; these read CISC…MLQA, FRTL…FLLA, VIFV…TSAM, VFLG…YMLH, WVLS…SAAS, GGAF…FCLA, WVVY…SYVG, IMLY…FHLF, YSFS…VLLL, and IPAV…PIMT.

Belongs to the acyltransferase 3 family.

The protein resides in the cell membrane. This chain is Putative membrane-bound acyltransferase YfiQ (yfiQ), found in Bacillus subtilis (strain 168).